Consider the following 332-residue polypeptide: tRNA dimethylallyltransferase (332 aa).

Residue 14–21 (GPTASGKT) coordinates ATP. Residue 16 to 21 (TASGKT) coordinates substrate. The tract at residues 39–42 (DSMQ) is interaction with substrate tRNA. The disordered stretch occupies residues 312–332 (NKRSSNHDCKRKHPRPSTREL). The segment covering 320 to 332 (CKRKHPRPSTREL) has biased composition (basic residues).

It belongs to the IPP transferase family. In terms of assembly, monomer. Requires Mg(2+) as cofactor.

The enzyme catalyses adenosine(37) in tRNA + dimethylallyl diphosphate = N(6)-dimethylallyladenosine(37) in tRNA + diphosphate. Its function is as follows. Catalyzes the transfer of a dimethylallyl group onto the adenine at position 37 in tRNAs that read codons beginning with uridine, leading to the formation of N6-(dimethylallyl)adenosine (i(6)A). This Staphylococcus epidermidis (strain ATCC 35984 / DSM 28319 / BCRC 17069 / CCUG 31568 / BM 3577 / RP62A) protein is tRNA dimethylallyltransferase.